The chain runs to 325 residues: Probable cell division protein WhiA (325 aa).

The segment at residues 273–306 (SLEELGALADPPLTKDAVAGRIRRLLALADKRAN) is a DNA-binding region (H-T-H motif).

The protein belongs to the WhiA family.

Involved in cell division and chromosome segregation. This Frankia alni (strain DSM 45986 / CECT 9034 / ACN14a) protein is Probable cell division protein WhiA.